The chain runs to 479 residues: D-hydantoinase/dihydropyrimidinase (479 aa).

Positions 59, 61, and 150 each coordinate Zn(2+). Lys-150 is modified (N6-carboxylysine). Tyr-155 lines the substrate pocket. The Zn(2+) site is built by His-183 and His-239. Ser-289 lines the substrate pocket. Asp-316 lines the Zn(2+) pocket. Asn-337 contacts substrate.

The protein belongs to the metallo-dependent hydrolases superfamily. Hydantoinase/dihydropyrimidinase family. As to quaternary structure, homotetramer. Requires Zn(2+) as cofactor. Post-translationally, carboxylation allows a single lysine to coordinate two zinc ions.

It catalyses the reaction 5,6-dihydrouracil + H2O = 3-(carbamoylamino)propanoate + H(+). Its function is as follows. Catalyzes the hydrolysis of dihydropyrimidines and of the structurally related DL-5-mono-substituted hydantoins, to produce N-carbamoyl-D-amino acids. The sequence is that of D-hydantoinase/dihydropyrimidinase (dht) from Pseudomonas aeruginosa (strain ATCC 15692 / DSM 22644 / CIP 104116 / JCM 14847 / LMG 12228 / 1C / PRS 101 / PAO1).